We begin with the raw amino-acid sequence, 211 residues long: Guanylate kinase (211 aa).

Residues 5–184 (GLLIVFSGPS…AAERVKRIIE (180 aa)) enclose the Guanylate kinase-like domain. Residue 12–19 (GPSGVGKG) participates in ATP binding.

The protein belongs to the guanylate kinase family.

The protein localises to the cytoplasm. The catalysed reaction is GMP + ATP = GDP + ADP. Its function is as follows. Essential for recycling GMP and indirectly, cGMP. In Streptococcus pyogenes serotype M1, this protein is Guanylate kinase.